Reading from the N-terminus, the 252-residue chain is MIKKRIIPCLDVKDGRVVKGIQFKGLRDIGNPVDLAMYYNEAGADELVFLDISKTEEGHSLMLEVIEQTASRLFIPLTVGGGIQSLDDITQLLNHGADKVSLNSSALKNPQLIKQASDKFGRQCICIAIDSYYDPERKAHYCCTHGGKKMTNIKVYDWVQQVEQLGAGELLVTSMGHDGMKQGFDIEHLAKIKSLVNIPIIASGGGGNAQHFVELFDQTDVSAGLAASILHDRETTVQSIKEVIRQGGIAVR.

Catalysis depends on residues D11 and D130.

It belongs to the HisA/HisF family. Heterodimer of HisH and HisF.

It localises to the cytoplasm. The catalysed reaction is 5-[(5-phospho-1-deoxy-D-ribulos-1-ylimino)methylamino]-1-(5-phospho-beta-D-ribosyl)imidazole-4-carboxamide + L-glutamine = D-erythro-1-(imidazol-4-yl)glycerol 3-phosphate + 5-amino-1-(5-phospho-beta-D-ribosyl)imidazole-4-carboxamide + L-glutamate + H(+). It functions in the pathway amino-acid biosynthesis; L-histidine biosynthesis; L-histidine from 5-phospho-alpha-D-ribose 1-diphosphate: step 5/9. Functionally, IGPS catalyzes the conversion of PRFAR and glutamine to IGP, AICAR and glutamate. The HisF subunit catalyzes the cyclization activity that produces IGP and AICAR from PRFAR using the ammonia provided by the HisH subunit. The protein is Imidazole glycerol phosphate synthase subunit HisF of Staphylococcus aureus (strain bovine RF122 / ET3-1).